A 259-amino-acid polypeptide reads, in one-letter code: MSGHSKWATTKHKKAAIDAKRGKLFAKLIKNIEIAAKMGGPDPAGNPTLYDAIQKAKKQSVPNKNIDSAVKRGGGLESGGVDYETIMYEAYGPQGVALLVECLTDNRNRAAMEVRTAVTRNGGTMADPGSVSRLFTRKGVVVVEKEQERGGKPWEISEDDILEATLDAGAEEVDDLGESFEIQSEASDVVAVRTALQAAGIDYDSAEVQFVATLDIPVAETDVAGKVFRLIDAVDDLDDVQNVFTNADIPDDVLDSIDA.

This sequence belongs to the TACO1 family.

It localises to the cytoplasm. This Nocardioides sp. (strain ATCC BAA-499 / JS614) protein is Probable transcriptional regulatory protein Noca_2383.